Here is a 172-residue protein sequence, read N- to C-terminus: 3-phenylpropionate/cinnamic acid dioxygenase subunit beta (172 aa).

Belongs to the bacterial ring-hydroxylating dioxygenase beta subunit family. As to quaternary structure, this dioxygenase system consists of four proteins: the two subunits of the hydroxylase component (HcaE and HcaF), a ferredoxin (HcaC) and a ferredoxin reductase (HcaD).

The enzyme catalyses 3-phenylpropanoate + NADH + O2 + H(+) = 3-(cis-5,6-dihydroxycyclohexa-1,3-dien-1-yl)propanoate + NAD(+). It catalyses the reaction (E)-cinnamate + NADH + O2 + H(+) = (2E)-3-(cis-5,6-dihydroxycyclohexa-1,3-dien-1-yl)prop-2-enoate + NAD(+). The protein operates within aromatic compound metabolism; 3-phenylpropanoate degradation. Part of the multicomponent 3-phenylpropionate dioxygenase. Converts 3-phenylpropionic acid (PP) and cinnamic acid (CI) into 3-phenylpropionate-dihydrodiol (PP-dihydrodiol) and cinnamic acid-dihydrodiol (CI-dihydrodiol), respectively. This chain is 3-phenylpropionate/cinnamic acid dioxygenase subunit beta, found in Shigella boydii serotype 4 (strain Sb227).